The sequence spans 216 residues: Protein-L-isoaspartate O-methyltransferase (216 aa).

Serine 65 is a catalytic residue.

The protein belongs to the methyltransferase superfamily. L-isoaspartyl/D-aspartyl protein methyltransferase family.

The protein resides in the cytoplasm. The catalysed reaction is [protein]-L-isoaspartate + S-adenosyl-L-methionine = [protein]-L-isoaspartate alpha-methyl ester + S-adenosyl-L-homocysteine. Its function is as follows. Catalyzes the methyl esterification of L-isoaspartyl residues in peptides and proteins that result from spontaneous decomposition of normal L-aspartyl and L-asparaginyl residues. It plays a role in the repair and/or degradation of damaged proteins. This chain is Protein-L-isoaspartate O-methyltransferase, found in Chlorobium phaeobacteroides (strain DSM 266 / SMG 266 / 2430).